We begin with the raw amino-acid sequence, 169 residues long: Crossover junction endodeoxyribonuclease RuvC (169 aa).

Catalysis depends on residues aspartate 11, glutamate 71, and aspartate 143. Mg(2+) contacts are provided by aspartate 11, glutamate 71, and aspartate 143.

This sequence belongs to the RuvC family. Homodimer which binds Holliday junction (HJ) DNA. The HJ becomes 2-fold symmetrical on binding to RuvC with unstacked arms; it has a different conformation from HJ DNA in complex with RuvA. In the full resolvosome a probable DNA-RuvA(4)-RuvB(12)-RuvC(2) complex forms which resolves the HJ. Mg(2+) serves as cofactor.

The protein localises to the cytoplasm. The catalysed reaction is Endonucleolytic cleavage at a junction such as a reciprocal single-stranded crossover between two homologous DNA duplexes (Holliday junction).. The RuvA-RuvB-RuvC complex processes Holliday junction (HJ) DNA during genetic recombination and DNA repair. Endonuclease that resolves HJ intermediates. Cleaves cruciform DNA by making single-stranded nicks across the HJ at symmetrical positions within the homologous arms, yielding a 5'-phosphate and a 3'-hydroxyl group; requires a central core of homology in the junction. The consensus cleavage sequence is 5'-(A/T)TT(C/G)-3'. Cleavage occurs on the 3'-side of the TT dinucleotide at the point of strand exchange. HJ branch migration catalyzed by RuvA-RuvB allows RuvC to scan DNA until it finds its consensus sequence, where it cleaves and resolves the cruciform DNA. The protein is Crossover junction endodeoxyribonuclease RuvC of Rhizobium etli (strain CIAT 652).